The following is a 344-amino-acid chain: UDP-3-O-acylglucosamine N-acyltransferase (344 aa).

The active-site Proton acceptor is His248.

It belongs to the transferase hexapeptide repeat family. LpxD subfamily. Homotrimer.

The catalysed reaction is a UDP-3-O-[(3R)-3-hydroxyacyl]-alpha-D-glucosamine + a (3R)-hydroxyacyl-[ACP] = a UDP-2-N,3-O-bis[(3R)-3-hydroxyacyl]-alpha-D-glucosamine + holo-[ACP] + H(+). Its pathway is bacterial outer membrane biogenesis; LPS lipid A biosynthesis. Its function is as follows. Catalyzes the N-acylation of UDP-3-O-acylglucosamine using 3-hydroxyacyl-ACP as the acyl donor. Is involved in the biosynthesis of lipid A, a phosphorylated glycolipid that anchors the lipopolysaccharide to the outer membrane of the cell. The protein is UDP-3-O-acylglucosamine N-acyltransferase of Prochlorococcus marinus (strain MIT 9312).